We begin with the raw amino-acid sequence, 249 residues long: DNA repair protein RecO (249 aa).

It belongs to the RecO family.

In terms of biological role, involved in DNA repair and RecF pathway recombination. The sequence is that of DNA repair protein RecO from Mycoplasma capricolum subsp. capricolum (strain California kid / ATCC 27343 / NCTC 10154).